The following is a 365-amino-acid chain: Peptide chain release factor 2 (365 aa).

Position 252 is an N5-methylglutamine (Gln-252).

Belongs to the prokaryotic/mitochondrial release factor family. Methylated by PrmC. Methylation increases the termination efficiency of RF2.

The protein localises to the cytoplasm. Its function is as follows. Peptide chain release factor 2 directs the termination of translation in response to the peptide chain termination codons UGA and UAA. The polypeptide is Peptide chain release factor 2 (Haemophilus ducreyi (strain 35000HP / ATCC 700724)).